The primary structure comprises 545 residues: Chaperonin GroEL 3 (545 aa).

ATP-binding positions include T30–P33, K51, D87–T91, G415, and D496.

This sequence belongs to the chaperonin (HSP60) family. Forms a cylinder of 14 subunits composed of two heptameric rings stacked back-to-back. Interacts with the co-chaperonin GroES.

It localises to the cytoplasm. It carries out the reaction ATP + H2O + a folded polypeptide = ADP + phosphate + an unfolded polypeptide.. Together with its co-chaperonin GroES, plays an essential role in assisting protein folding. The GroEL-GroES system forms a nano-cage that allows encapsulation of the non-native substrate proteins and provides a physical environment optimized to promote and accelerate protein folding. The protein is Chaperonin GroEL 3 of Nitrobacter hamburgensis (strain DSM 10229 / NCIMB 13809 / X14).